Here is a 671-residue protein sequence, read N- to C-terminus: Solute carrier family 53 member 1 (671 aa).

The interval methionine 1–glutamate 193 is important for promoting lysosomal/autophagosomal degradation of PXo bodies following inorganic phosphate (Pi) starvation. Residues methionine 1–lysine 228 are Cytoplasmic-facing. Residues lysine 2–glycine 218 form the SPX domain. Residues lysine 152 to lysine 159 are important for inositol polyphosphate binding. A helical membrane pass occupies residues valine 229–glycine 253. The Extracellular segment spans residues glutamate 254 to asparagine 255. A helical transmembrane segment spans residues tryptophan 256–glycine 287. At valine 288–asparagine 300 the chain is on the cytoplasmic side. The chain crosses the membrane as a helical span at residues histidine 301 to cysteine 328. Topologically, residues aspartate 329–proline 334 are extracellular. The chain crosses the membrane as a helical span at residues glutamine 335–threonine 356. The segment at residues phenylalanine 357–methionine 374 is an intramembrane region (helical). Topologically, residues alanine 375–phenylalanine 379 are cytoplasmic. Residues valine 380–threonine 413 traverse the membrane as a discontinuously helical segment. Phosphate is bound by residues aspartate 389 and asparagine 392. The Extracellular portion of the chain corresponds to tryptophan 414 to histidine 415. The discontinuously helical transmembrane segment at lysine 416–lysine 455 threads the bilayer. One can recognise an EXS domain in the interval histidine 423–arginine 627. Glutamate 456 is a topological domain (cytoplasmic). The chain crosses the membrane as a helical span at residues serine 457 to proline 488. 2 residues coordinate phosphate: lysine 466 and tyrosine 467. Residues leucine 489–lysine 491 are Extracellular-facing. A helical transmembrane segment spans residues glutamate 492–tryptophan 519. The Cytoplasmic portion of the chain corresponds to glycine 520–tyrosine 538. A discontinuously helical membrane pass occupies residues serine 539–isoleucine 570. Positions 555, 586, and 587 each coordinate phosphate. A helical membrane pass occupies residues glutamate 571–valine 609. Topologically, residues arginine 610–serine 671 are cytoplasmic.

It belongs to the SYG1 (TC 2.A.94) family. As to quaternary structure, homodimer. Interacts with the FAR/SIN/STRIPAK complex members Cka and Pp2A-29B. Detected in PXo bodies found in the enterocytes and progenitors of the midgut and in the hindgut, but rarely occur in the Malpighian tubules, crop, brain, muscles and germlines (at protein level).

The protein resides in the membrane. The catalysed reaction is phosphate(in) = phosphate(out). Inorganic ion transporter that mediates phosphate ion export across the cell membrane. Plays a major role in phosphate homeostasis, preventing intracellular phosphate accumulation and possible calcium phosphate precipitation, ultimately preserving calcium signaling. Binds inositol hexakisphosphate (Ins6P) and similar inositol polyphosphates, such as 5-diphospho-inositol pentakisphosphate (5-InsP7), which are important intracellular signaling molecules involved in regulation of phosphate flux. In enterocytes and differentiating progenitors of the gut, promotes the biogenesis and maintenance of organelles called PXo bodies that store intracellular inorganic phosphate (Pi), and also regulates Cka-JNK mediated tissue homeostasis in response to Pi availability in these tissues. Under conditions of adequate Pi, transports Pi into PXo bodies which convert and store the Pi in the form of phospholipids. It also inhibits Cka at the post-transcriptional level to prevent Cka-bsk/JNK mediated cell proliferation. Upon Pi starvation, Pxo expression is down-regulated resulting in the PXo bodies decreasing in phospholipid content until they undergo lysosomal/autophagosomal degradation and release the stored Pi back into the cytosol for use by the cell. Decrease in Pxo expression also activates the Cka protein, which moves to the nucleus to activate bsk/JNK which then induces nearby progenitor cells to proliferate and form new absorptive cells, probably helping the organism to cope with the nutrient deficiency by maximizing absorption of dietary Pi. The polypeptide is Solute carrier family 53 member 1 (Drosophila melanogaster (Fruit fly)).